The primary structure comprises 199 residues: Recombination protein RecR (199 aa).

The C4-type zinc-finger motif lies at 57-72; sequence CSQCHNITDTDPCQIC. Residues 80–176 enclose the Toprim domain; that stretch reads TTICVVQESR…KVTRLAHGLP (97 aa).

This sequence belongs to the RecR family.

May play a role in DNA repair. It seems to be involved in an RecBC-independent recombinational process of DNA repair. It may act with RecF and RecO. This Shouchella clausii (strain KSM-K16) (Alkalihalobacillus clausii) protein is Recombination protein RecR.